The primary structure comprises 964 residues: SKI family transcriptional corepressor 1 (964 aa).

6 disordered regions span residues 45–72 (TQLG…SSAL), 278–365 (RTFS…GGSA), 414–461 (AGEP…WGHQ), 525–587 (AGGG…RKSS), 610–768 (REAY…GAAK), and 794–842 (LCTP…EDGL). The span at 283–310 (QGGGGGGANSGSGGAGKGGAGGGGGPGC) shows a compositional bias: gly residues. Positions 345–355 (ALGLAAAASGP) are enriched in low complexity. Gly residues-rich tracts occupy residues 356 to 365 (AGPGGPGGSA) and 417 to 440 (PKGG…GPGA). Residues 571-583 (SLGPLPPPPPPPA) are compositionally biased toward pro residues. A compositionally biased stretch (acidic residues) spans 652-661 (DTADEPEVDV). A compositionally biased stretch (basic and acidic residues) spans 798–808 (ETHEPDKEDNH). The segment covering 823–834 (DQRSVSQPSPAN) has biased composition (polar residues). Positions 853–921 (EKDIENLARE…DTLCNELDQE (69 aa)) form a coiled coil.

It belongs to the SKI family. In terms of assembly, interacts with SMAD1, SMAD2 and SMAD3. Interacts with LBX1. Expressed in brain with higher levels in embryo than adult. Expressed by migratory precursors of Purkinje cells in the postnatal brain. Also expressed in adult testis.

The protein localises to the nucleus. Functionally, inhibits BMP signaling. Acts as a transcriptional corepressor of LBX1. This chain is SKI family transcriptional corepressor 1 (Skor1), found in Mus musculus (Mouse).